Reading from the N-terminus, the 330-residue chain is Calponin-3 (330 aa).

An N6-acetyllysine modification is found at Lys23. A Calponin-homology (CH) domain is found at 26–130 (QQAEEDLRNW…TLVALAGLAK (105 aa)). N6-methyllysine is present on Lys158. 3 Calponin-like repeats span residues 164-189 (IGLQ…RHLY), 204-229 (ISLQ…RDIY), and 243-268 (ISLQ…RQVY). A disordered region spans residues 279 to 330 (PVIHNGSQGTGTNGSEISDSDYQAEYPDEYHGEYPDDYPREYQYGDDQGIDY). A compositionally biased stretch (basic and acidic residues) spans 306-318 (DEYHGEYPDDYPR).

It belongs to the calponin family.

Its function is as follows. Thin filament-associated protein that is implicated in the regulation and modulation of smooth muscle contraction. It is capable of binding to actin, calmodulin and tropomyosin. The interaction of calponin with actin inhibits the actomyosin Mg-ATPase activity. The protein is Calponin-3 (Cnn3) of Mus musculus (Mouse).